A 985-amino-acid chain; its full sequence is Alpha-glucosidase (985 aa).

The N-terminal stretch at 1–25 is a signal peptide; sequence MAGLKSFLASSWLLPVACGASQSIV. N126, N145, N220, N255, N349, and N424 each carry an N-linked (GlcNAc...) asparagine glycan. D492 serves as the catalytic Nucleophile. Residue E495 is part of the active site. N-linked (GlcNAc...) asparagine glycans are attached at residues N508, N536, N539, N602, and N624. The active-site Proton donor is the D660. N-linked (GlcNAc...) asparagine glycans are attached at residues N661, N835, N881, N929, and N957.

It belongs to the glycosyl hydrolase 31 family.

The enzyme catalyses Hydrolysis of terminal, non-reducing (1-&gt;4)-linked alpha-D-glucose residues with release of alpha-D-glucose.. Hydrolyzes malto-oligosaccharides, but has a low activity toward soluble starch. This chain is Alpha-glucosidase (agdA), found in Aspergillus oryzae (strain ATCC 42149 / RIB 40) (Yellow koji mold).